A 273-amino-acid polypeptide reads, in one-letter code: HMP-PP phosphatase (273 aa).

Asp8 serves as the catalytic Nucleophile. Residues Asp8, Asp10, and Asp212 each coordinate Mg(2+).

It belongs to the HAD-like hydrolase superfamily. Cof family. The cofactor is Mg(2+).

The catalysed reaction is 4-amino-2-methyl-5-(diphosphooxymethyl)pyrimidine + H2O = 4-amino-2-methyl-5-(phosphooxymethyl)pyrimidine + phosphate + H(+). In terms of biological role, catalyzes the hydrolysis of 4-amino-2-methyl-5-hydroxymethylpyrimidine pyrophosphate (HMP-PP) to 4-amino-2-methyl-5-hydroxymethylpyrimidine phosphate (HMP-P). In Yersinia pestis bv. Antiqua (strain Antiqua), this protein is HMP-PP phosphatase.